Consider the following 180-residue polypeptide: Large ribosomal subunit protein uL6 (180 aa).

The protein belongs to the universal ribosomal protein uL6 family. Part of the 50S ribosomal subunit.

Its function is as follows. This protein binds to the 23S rRNA, and is important in its secondary structure. It is located near the subunit interface in the base of the L7/L12 stalk, and near the tRNA binding site of the peptidyltransferase center. This is Large ribosomal subunit protein uL6 from Clostridioides difficile (strain 630) (Peptoclostridium difficile).